Here is a 174-residue protein sequence, read N- to C-terminus: RNA pyrophosphohydrolase (174 aa).

The Nudix hydrolase domain occupies 6–145 (GYRPNVGMII…KRRVYWQALQ (140 aa)). Positions 38–59 (GGIDYAETPEQAMFRELEEEVG) match the Nudix box motif.

This sequence belongs to the Nudix hydrolase family. RppH subfamily. It depends on a divalent metal cation as a cofactor.

Accelerates the degradation of transcripts by removing pyrophosphate from the 5'-end of triphosphorylated RNA, leading to a more labile monophosphorylated state that can stimulate subsequent ribonuclease cleavage. The protein is RNA pyrophosphohydrolase of Acidithiobacillus ferrooxidans (strain ATCC 53993 / BNL-5-31) (Leptospirillum ferrooxidans (ATCC 53993)).